We begin with the raw amino-acid sequence, 115 residues long: Large ribosomal subunit protein uL24 (115 aa).

2 disordered regions span residues 45-77 and 96-115; these read VRQSQKNPQGGRLNKEMPMSASNVMLVDPSTGK and KASGESLGQIAPAKASKAAS.

Belongs to the universal ribosomal protein uL24 family. As to quaternary structure, part of the 50S ribosomal subunit.

Functionally, one of two assembly initiator proteins, it binds directly to the 5'-end of the 23S rRNA, where it nucleates assembly of the 50S subunit. In terms of biological role, one of the proteins that surrounds the polypeptide exit tunnel on the outside of the subunit. This chain is Large ribosomal subunit protein uL24, found in Rhodopirellula baltica (strain DSM 10527 / NCIMB 13988 / SH1).